The chain runs to 1134 residues: MDLCLKGSQINLATRQKTKPKYTSRSLTTLHNPCPHFRPRSANFLQQRSRSSPFLGRPQSADPKFGRRLSNYFVEKELRNGGKRQVSSNDLLKSLLEEPIKRSWLCRSTCNSSESDYSLHKRTPDSSEEGEQFLVNMPVGEKVKSYSSYSGNQGLSNGALLQRTAKPDLPGRVSFSKPNMHADLDSSDCDNDKQEVRPSISAPGPLTLPSFLSKVEQADPVGQKKSVHFGSTAAEGEVLAETYEYPKCPSENCTCSTRSSSTTSTNEASASDVKCACDAPSCRFMESSKQVEPTSPTPTLPKAPSSELDVIREYKQAVEGVQVVKNHLGTDTLNNIEILPNYLDKYASPTKEKQNNLSETKNMATNSSAVNNGSVVYRPVGNPRNFGAENNFLPAVQDDRRSFANGSSDGVINNYLKVASTPPFVGKKKENVKPASADPIARSSKSKVTKSTINPAPLGKMKKAISVGSLREERKLSEYNLDKVDSWMSMQDQKQYDGKHKPGLEDLDEAQDNDTASQLSLKSNEDSRDSTYDEIVSVIKEIEEDKKRDNFSEGIPSELNLNLDSRCETADTVTVSEGKVPESGDKYKDILAYLNNVESSCDKTLMETRRSIPDSNRSEVEFVVEPDVTDEVPKLSELLMLPNHQLARRVIALSLRANELANAIHMSKEHVFQLRGEKQKSLRAEKSTAAAKLRDQKKHYEEVVTRHQGFIEQLLKDKGSLCEKVAALTRRLESQNQAWEHRLETELARTKETTMAGEKIRRERWVRENTKKIKELTVKGLEAEINKMNCDHQREVTELKRTHQMQLLDALEEARTKHEQIETSIRESCAQDREAIIEKERTAIRERFERQLEEEQRTQAEQRQKLTEEFAAERDRLQSELRQRENEHQARRQEALREQEQELEQAKFEMQERMAKQEEKYQNRVNTIEQQYQADFELWKTEHENKTKLAQAEKENAIRQHYRAERDRQLDELVVRMEADALQHKEEHELKMNRLKEKYEKDLVLAESVEKSLREKYAETRGKLAEADAQVRNSQAEVKQLQLELSHSKKMCGDIIMERDRLRDNLNADIQSELGVLNERHKQEMDQLQKRVHQTIQRQEETIEILKGDNDALRQQCLKLNAVIRQQRKDYCVK.

Disordered regions lie at residues 111-131, 168-208, 286-306, 425-455, and 492-528; these read NSSE…EEGE, DLPG…PLTL, ESSK…APSS, VGKK…TINP, and DQKQ…EDSR. Residues 180–196 are compositionally biased toward basic and acidic residues; the sequence is MHADLDSSDCDNDKQEV. A compositionally biased stretch (basic and acidic residues) spans 494 to 504; the sequence is KQYDGKHKPGL. Residues 513-522 are compositionally biased toward polar residues; sequence NDTASQLSLK. Positions 732–1131 form a coiled coil; that stretch reads LESQNQAWEH…AVIRQQRKDY (400 aa).

This sequence belongs to the CEP131 family. In terms of tissue distribution, expressed in chordotonal (Ch) neuronal precursors. Expressed in ciliated cells, like sensory neurons and spermatids.

It localises to the cytoplasm. The protein localises to the cytoskeleton. The protein resides in the microtubule organizing center. Its subcellular location is the centrosome. It is found in the cilium basal body. It localises to the centriole. Its function is as follows. Cilium-specific protein with a role in cilium/flagellum formation. May be involved in transport of components into the growing cilium. In germ cells and sensory neurons, plays a role with Cby in the building of the transition zone necessary for the formation of the ciliary cap and for the correct elongation of the axoneme. This Drosophila melanogaster (Fruit fly) protein is Centrosomal protein of 131 kDa.